We begin with the raw amino-acid sequence, 91 residues long: Uteroglobin (91 aa).

A signal peptide spans 1-21 (MKLAVTLTLVTLALCCSSASA).

It belongs to the secretoglobin family. Antiparallel homodimer; disulfide-linked. Interaction with LMBR1L has been observed in PubMed:16423471, but not in PubMed:23964685. In terms of tissue distribution, club cells (nonciliated cells of the surface epithelium of the pulmonary airways).

The protein localises to the secreted. Binds phosphatidylcholine, phosphatidylinositol, polychlorinated biphenyls (PCB) and weakly progesterone, potent inhibitor of phospholipase A2. The sequence is that of Uteroglobin (SCGB1A1) from Homo sapiens (Human).